The following is an 81-amino-acid chain: Anaphase-promoting complex subunit emb-1 (81 aa).

In terms of assembly, the APC/C is probably composed of at least 12 subunits: apc-2, apc-10, apc-11, cdc-26, emb-1, emb-27, emb-30, mat-1, mat-2, mat-3, such-1 and gfi-3. In terms of tissue distribution, expressed in germ cells.

The protein operates within protein modification; protein ubiquitination. Probable component of the anaphase promoting complex/cyclosome (APC/C), a cell cycle-regulated E3 ubiquitin ligase that controls progression through mitosis and the G1 phase of the cell cycle. The APC/C complex acts by mediating ubiquitination and subsequent degradation of target proteins. Developmental role in early embryogenesis and the metaphase to anaphase transition in meiosis and mitosis. May be required for germline proliferation. Required for male tail development and hermaphrodite vulva formation. This Caenorhabditis elegans protein is Anaphase-promoting complex subunit emb-1.